We begin with the raw amino-acid sequence, 31 residues long: Phospholipase A2 homolog P-elapitoxin-Aa1a beta chain (31 aa).

Belongs to the phospholipase A2 family. Group I subfamily. Heterotrimer of alpha, beta and gamma chains, each related to PLA2. In terms of tissue distribution, expressed by the venom gland.

It localises to the secreted. Heterotrimer: Snake venom phospholipase A2 (PLA2) that has presynaptic neurotoxicity. Inhibits nerve-evoked twitch contractions but not responses to cholinergic agonists acetylcholine and carbachol and to depolarizing agonist KCl. Causes a fade in tetanic contractions. Displays a triphasic mode of action with depression, enhancement and blockade of neurotransmission. Does not display myotoxic activity such as changes in baseline muscle tension or inhibition of directly stimulated muscle twitches. All subunits are necessary for maximum toxicity. In terms of biological role, monomer: The beta chain has no enzymatic activity and is not toxic by itself. This Acanthophis antarcticus (Common death adder) protein is Phospholipase A2 homolog P-elapitoxin-Aa1a beta chain.